Consider the following 358-residue polypeptide: Cyanide hydratase (358 aa).

The CN hydrolase domain maps to 8-287 (YKAAAVNAEP…QGLLFVDIDL (280 aa)). The Proton acceptor role is filled by Glu-48. Residue Lys-130 is part of the active site. Residue Cys-165 is the Nucleophile of the active site.

This sequence belongs to the carbon-nitrogen hydrolase superfamily. Nitrilase family. As to quaternary structure, oligomer of dimers, forming left-handed helical fibers.

It carries out the reaction formamide = hydrogen cyanide + H2O. In terms of biological role, catalyzes the hydration of cyanide to formamide. Degradation of cyanide may be important for plant pathogenic fungi in infection of cyanogenic plants. This Penicillium rubens (strain ATCC 28089 / DSM 1075 / NRRL 1951 / Wisconsin 54-1255) (Penicillium chrysogenum) protein is Cyanide hydratase.